Here is an 801-residue protein sequence, read N- to C-terminus: Elongation factor G, mitochondrial (801 aa).

Residues 1–62 (MRTPTLARLP…LSKHFQQRRN (62 aa)) constitute a mitochondrion transit peptide. Positions 99-386 (SRVRNIGIAA…GVIDYLPNPS (288 aa)) constitute a tr-type G domain. GTP is bound by residues 108–115 (AHIDSGKT), 184–188 (DTPGH), and 238–241 (NKMD).

This sequence belongs to the TRAFAC class translation factor GTPase superfamily. Classic translation factor GTPase family. EF-G/EF-2 subfamily.

Its subcellular location is the mitochondrion. It participates in protein biosynthesis; polypeptide chain elongation. Mitochondrial GTPase that catalyzes the GTP-dependent ribosomal translocation step during translation elongation. During this step, the ribosome changes from the pre-translocational (PRE) to the post-translocational (POST) state as the newly formed A-site-bound peptidyl-tRNA and P-site-bound deacylated tRNA move to the P and E sites, respectively. Catalyzes the coordinated movement of the two tRNA molecules, the mRNA and conformational changes in the ribosome. This chain is Elongation factor G, mitochondrial (mef1), found in Aspergillus niger (strain ATCC MYA-4892 / CBS 513.88 / FGSC A1513).